Reading from the N-terminus, the 543-residue chain is Mannuronan C5-epimerase (543 aa).

The first 35 residues, 1-35 (MPDISLSIPRRRLPRLRPLAAAVLGAVLLHGQAWA), serve as a signal peptide directing secretion. PbH1 repeat units lie at residues 243-270 (GAEVYLSNSTFTSFGYNASKAYGISISQ), 283-304 (RPKGWVIDSTIVDSWYGFYCYE), 305-327 (ADDLVVKGNTYRDNIVYGIDPHD), 329-352 (SHRLIIADNTVHGTRKKHGIIVSR), 354-376 (VNDSFIFNNRSYENKLSGIVLDR), 378-400 (SEGNLVAYNEVYRNHSDGITLYE), and 401-423 (SGDNLLWGNQVLANRRHGIRVRN). The Proton acceptor role is filled by H326.

This sequence belongs to the D-mannuronate C5-epimerase family.

The protein resides in the periplasm. It catalyses the reaction [(1-&gt;4)-beta-D-mannuronosyl](n) = [alginate](n). It functions in the pathway glycan biosynthesis; alginate biosynthesis. With respect to regulation, inhibited by the presence of acetyl groups on the substrate. In terms of biological role, catalyzes the epimerization of beta-D-mannuronate to alpha-L-guluronate during the synthesis of the linear polysaccharide alginate. In addition, is part of a periplasmic protein complex that protects alginate from degradation by AlgL by channeling the newly formed alginate polymer through a scaffold that transfers the alginate polymer through the periplasmic space to the outer membrane secretin AlgE. The sequence is that of Mannuronan C5-epimerase from Pseudomonas aeruginosa (strain ATCC 15692 / DSM 22644 / CIP 104116 / JCM 14847 / LMG 12228 / 1C / PRS 101 / PAO1).